We begin with the raw amino-acid sequence, 83 residues long: Small ribosomal subunit protein bS16 (83 aa).

Belongs to the bacterial ribosomal protein bS16 family.

The protein is Small ribosomal subunit protein bS16 of Thermosynechococcus vestitus (strain NIES-2133 / IAM M-273 / BP-1).